The chain runs to 419 residues: L-rhamnose isomerase (419 aa).

Positions 262, 294, and 296 each coordinate Mn(2+).

This sequence belongs to the rhamnose isomerase family. In terms of assembly, homotetramer. Requires Mn(2+) as cofactor.

It localises to the cytoplasm. It catalyses the reaction L-rhamnopyranose = L-rhamnulose. It participates in carbohydrate degradation; L-rhamnose degradation; glycerone phosphate from L-rhamnose: step 1/3. In terms of biological role, catalyzes the interconversion of L-rhamnose and L-rhamnulose. The polypeptide is L-rhamnose isomerase (Enterobacter sp. (strain 638)).